Consider the following 153-residue polypeptide: Aspartate carbamoyltransferase regulatory chain (153 aa).

The Zn(2+) site is built by C109, C114, C138, and C141.

The protein belongs to the PyrI family. In terms of assembly, contains catalytic and regulatory chains. Requires Zn(2+) as cofactor.

Functionally, involved in allosteric regulation of aspartate carbamoyltransferase. This Vibrio vulnificus (strain CMCP6) protein is Aspartate carbamoyltransferase regulatory chain.